The chain runs to 311 residues: Methionyl-tRNA formyltransferase (311 aa).

Residue 112–115 (SLLP) coordinates (6S)-5,6,7,8-tetrahydrofolate.

Belongs to the Fmt family.

It carries out the reaction L-methionyl-tRNA(fMet) + (6R)-10-formyltetrahydrofolate = N-formyl-L-methionyl-tRNA(fMet) + (6S)-5,6,7,8-tetrahydrofolate + H(+). In terms of biological role, attaches a formyl group to the free amino group of methionyl-tRNA(fMet). The formyl group appears to play a dual role in the initiator identity of N-formylmethionyl-tRNA by promoting its recognition by IF2 and preventing the misappropriation of this tRNA by the elongation apparatus. In Bradyrhizobium sp. (strain BTAi1 / ATCC BAA-1182), this protein is Methionyl-tRNA formyltransferase.